The primary structure comprises 285 residues: MARLQAFKDPSFHSLVATFRSLPLIRRFVLGLILLLICQQLAVLTWRFLLPEDSRIVGVSVTPAQAKEKPATPGDFTLFGHAPDADASTVNDAALSGDIPLTSLNISLTGVLASGDAKRSIAIIAKDSQQYSRNVGDAIPGYEAKIVTISADRVVLQYQGRYEALHLYQEEEATGAPSSSGAFNQVKDEIQKDPFSAQDYLTISPVTEEEVLKGYQLNPGKNPDLFYRAGLQDNDLAVSLNGMDLRDADQAQQAMAQLAGMSKFNLTVERDGQQQDIYLALDGDH.

Topologically, residues 1-27 are cytoplasmic; that stretch reads MARLQAFKDPSFHSLVATFRSLPLIRR. A helical membrane pass occupies residues 28–48; the sequence is FVLGLILLLICQQLAVLTWRF. At 49-285 the chain is on the periplasmic side; the sequence is LLPEDSRIVG…DIYLALDGDH (237 aa).

This sequence belongs to the GSP C family.

Its subcellular location is the cell inner membrane. Functionally, involved in a type II secretion system (T2SS, formerly general secretion pathway, GSP) for the export of proteins. Required for the translocation of the multiple pectic enzymes. This chain is Type II secretion system protein C (outC), found in Pectobacterium carotovorum subsp. carotovorum (Erwinia carotovora subsp. carotovora).